The primary structure comprises 768 residues: Tripartite motif-containing protein 67 (768 aa).

Residues 7-42 (CPVCGSLFREPIILPCSHNVCLPCARTIAVQTPDGE) form an RING-type; degenerate zinc finger. Residues 55 to 70 (AAAAATPPDQDAAAGA) show a composition bias toward low complexity. Disordered regions lie at residues 55-74 (AAAA…TSGG) and 247-284 (QPPP…ASAP). A B box-type 1; degenerate zinc finger spans residues 201 to 248 (AICQLCDRTPPEPAATLCEQCDVLYCATCQLKCHPSRGPFAKHRLVQP). A compositionally biased stretch (pro residues) spans 247-257 (QPPPPPTPPEA). The B box-type 2 zinc finger occupies 285 to 327 (RKFPTCPEHEMENYSMYCVSCRSPVCYMCLEEGRHSKHEVKPL). Positions 290, 293, 313, and 319 each coordinate Zn(2+). Residues 332 to 369 (KQHKAQLSQALNGVSDKAKEAKEFLVQLKNILQQIQEN) are a coiled coil. Residues 435 to 493 (IKEDDPSGFLQISDALIKRVQTSQEQWVKGALEPKVSAEFDLTLDSEPLLQAIHQLDFV) form the COS domain. The Fibronectin type-III domain maps to 498–592 (PPVPLLQLEK…KTVVLQTSDV (95 aa)). Residues 574–765 (NSSGVGPYSK…VPTNLGRPKL (192 aa)) form the B30.2/SPRY domain.

It localises to the cytoplasm. The protein resides in the cytoskeleton. This chain is Tripartite motif-containing protein 67 (Trim67), found in Mus musculus (Mouse).